A 254-amino-acid chain; its full sequence is 3-deoxy-manno-octulosonate cytidylyltransferase (254 aa).

The protein belongs to the KdsB family.

The protein resides in the cytoplasm. The catalysed reaction is 3-deoxy-alpha-D-manno-oct-2-ulosonate + CTP = CMP-3-deoxy-beta-D-manno-octulosonate + diphosphate. Its pathway is nucleotide-sugar biosynthesis; CMP-3-deoxy-D-manno-octulosonate biosynthesis; CMP-3-deoxy-D-manno-octulosonate from 3-deoxy-D-manno-octulosonate and CTP: step 1/1. It participates in bacterial outer membrane biogenesis; lipopolysaccharide biosynthesis. Its function is as follows. Activates KDO (a required 8-carbon sugar) for incorporation into bacterial lipopolysaccharide in Gram-negative bacteria. In Chlamydia felis (strain Fe/C-56) (Chlamydophila felis), this protein is 3-deoxy-manno-octulosonate cytidylyltransferase.